An 806-amino-acid polypeptide reads, in one-letter code: Lon protease (806 aa).

The Lon N-terminal domain occupies 13–206 (LPMMPIRDVV…RVAEMLDIEI (194 aa)). 356 to 363 (GPPGVGKT) serves as a coordination point for ATP. Positions 599-780 (KNEIGAATGL…DEVLKIALER (182 aa)) constitute a Lon proteolytic domain. Residues Ser-686 and Lys-729 contribute to the active site.

It belongs to the peptidase S16 family. In terms of assembly, homohexamer. Organized in a ring with a central cavity.

The protein localises to the cytoplasm. It carries out the reaction Hydrolysis of proteins in presence of ATP.. In terms of biological role, ATP-dependent serine protease that mediates the selective degradation of mutant and abnormal proteins as well as certain short-lived regulatory proteins. Required for cellular homeostasis and for survival from DNA damage and developmental changes induced by stress. Degrades polypeptides processively to yield small peptide fragments that are 5 to 10 amino acids long. Binds to DNA in a double-stranded, site-specific manner. This is Lon protease from Solibacter usitatus (strain Ellin6076).